The primary structure comprises 373 residues: Pectin lyase D (373 aa).

The first 19 residues, 1–19 (MKYAAALTAIAALAARAAA), serve as a signal peptide directing secretion. Disulfide bonds link Cys-82/Cys-101 and Cys-91/Cys-225. A glycan (N-linked (GlcNAc...) asparagine) is linked at Asn-128. Residue Arg-255 is part of the active site. N-linked (GlcNAc...) asparagine glycosylation occurs at Asn-274. An intrachain disulfide couples Cys-321 to Cys-329. The N-linked (GlcNAc...) asparagine glycan is linked to Asn-348. Low complexity predominate over residues 354–366 (LPSADAASTSPAS). The disordered stretch occupies residues 354-373 (LPSADAASTSPASNAGQGNL).

Belongs to the polysaccharide lyase 1 family. In terms of processing, may be O-glycosylated; does not contain N-acetylglucosamine.

The protein resides in the secreted. The catalysed reaction is Eliminative cleavage of (1-&gt;4)-alpha-D-galacturonan methyl ester to give oligosaccharides with 4-deoxy-6-O-methyl-alpha-D-galact-4-enuronosyl groups at their non-reducing ends.. Pectinolytic enzymes consist of four classes of enzymes: pectin lyase, polygalacturonase, pectin methylesterase and rhamnogalacturonase. Among pectinolytic enzymes, pectin lyase is the most important in depolymerization of pectin, since it cleaves internal glycosidic bonds of highly methylated pectins. The protein is Pectin lyase D (pelD) of Aspergillus niger.